The following is a 258-amino-acid chain: Probable parvulin-type peptidyl-prolyl cis-trans isomerase (258 aa).

The signal sequence occupies residues 1-19 (MKRIAMLAAACVIAVPAFA). The PpiC domain occupies 127–219 (KMEYKVRHIL…FGWHVIQVDD (93 aa)). A compositionally biased stretch (basic and acidic residues) spans 158-175 (DDLAKKNSKDPGSAERGG). The interval 158–178 (DDLAKKNSKDPGSAERGGDLG) is disordered.

The protein belongs to the PpiC/parvulin rotamase family.

It carries out the reaction [protein]-peptidylproline (omega=180) = [protein]-peptidylproline (omega=0). This is Probable parvulin-type peptidyl-prolyl cis-trans isomerase from Bordetella bronchiseptica (strain ATCC BAA-588 / NCTC 13252 / RB50) (Alcaligenes bronchisepticus).